A 904-amino-acid chain; its full sequence is Disintegrin and metalloproteinase domain-containing protein 22 (904 aa).

Positions 1 to 23 (MQAAAAASFWLLCVLGTCPLARC) are cleaved as a signal peptide. The propeptide occupies 24 to 223 (GRAGVASLKG…LKPRLKRRKR (200 aa)). Over 24-734 (GRAGVASLKG…LSGNGVAGTN (711 aa)) the chain is Extracellular. N-linked (GlcNAc...) asparagine glycosylation is present at asparagine 163. The Peptidase M12B domain occupies 237–436 (KYIELMIVND…GGGACLFNKP (200 aa)). 17 disulfides stabilise this stretch: cysteine 347–cysteine 431, cysteine 390–cysteine 415, cysteine 392–cysteine 399, cysteine 445–cysteine 475, cysteine 456–cysteine 472, cysteine 458–cysteine 464, cysteine 471–cysteine 492, cysteine 483–cysteine 489, cysteine 488–cysteine 514, cysteine 501–cysteine 521, cysteine 508–cysteine 540, cysteine 533–cysteine 545, cysteine 552–cysteine 603, cysteine 567–cysteine 633, cysteine 581–cysteine 591, cysteine 598–cysteine 661, and cysteine 655–cysteine 666. One can recognise a Disintegrin domain in the interval 442–529 (PPECGNGFIE…QCAPNVHKMD (88 aa)). N-linked (GlcNAc...) asparagine glycosylation is present at asparagine 517. Asparagine 632 is a glycosylation site (N-linked (GlcNAc...) asparagine). A glycan (N-linked (GlcNAc...) asparagine) is linked at asparagine 673. The EGF-like domain occupies 673-710 (NFSTCSSSKAGTVCSGNGVCSNELKCVCNRHWTGADCG). 3 disulfides stabilise this stretch: cysteine 677/cysteine 692, cysteine 686/cysteine 698, and cysteine 700/cysteine 709. The helical transmembrane segment at 735 to 755 (IIIGIIAGTILVLALILGITA) threads the bilayer. Topologically, residues 756 to 857 (WGYKNYREQR…RFRPRSNSTE (102 aa)) are cytoplasmic. Residues 769–904 (QGDYVKKPGD…QSARLWETSI (136 aa)) form a disordered region. Residues 789-808 (GGSTNSASSSKKRSNGLSHS) show a composition bias toward low complexity. A phosphoserine mark is found at serine 808, lysine 817, and serine 832. Basic and acidic residues predominate over residues 809-827 (WSERIPDTKHISDICENGR). Residues 840–851 (NKKKIRGKRFRP) show a composition bias toward basic residues. Phosphoserine occurs at positions 855, 860, 864, 868, and 882. Residues 860–875 (SPAKSPSSSTGSIASS) are compositionally biased toward low complexity.

In terms of assembly, interacts with LGI1. Can bind to LGI4. Interacts with KCNA2, DLG2 and DLG4. Interacts with ADAM11. Interacts (via C-terminus) with YWHAB/14-3-3 beta. Interacts (via C-terminus) with YWHAZ/14-3-3 zeta. The precursor is cleaved by a furin endopeptidase. In terms of tissue distribution, detected in juxtaparanodal zones in the central nervous system and at nerve terminal plexuses of basket cells in the cerebellum (at protein level). Expressed at high levels in the brain. Strongly expressed in cerebellar granule cells and hippocampus. In spinal cord, expression is restricted to gray matter.

The protein localises to the cell membrane. It localises to the cell projection. Its subcellular location is the axon. Its function is as follows. Probable ligand for integrin in the brain. This is a non catalytic metalloprotease-like protein. Involved in regulation of cell adhesion and spreading and in inhibition of cell proliferation. Neuronal receptor for LGI1. This is Disintegrin and metalloproteinase domain-containing protein 22 (Adam22) from Mus musculus (Mouse).